The sequence spans 312 residues: MAHSHSHADSHLPKDNNARRLLFAFIVTAGFMLLEVVGGILSGSLALLADAGHMLTDAAALLFALLAVQFSRRPPTVRHTFGWLRLTTLAAFVNAIALVVITLLIVWEAIERFYTPRPVAGNLMMVIAVAGLLANLFAFWILHRGSDEKNLNVRAAALHVMGDLLGSVGAIVAALIIIWTGWTPADPILSILVSVLVLRSAWRLLKDSVNELLEGAPVSLDINALQRHLSREIPEVRNVHHVHVWMVGEKPVMTLHAQVIPPHDHDALLERIQDFLMHEYHIAHATIQMEYQVCHGPDCHLNQTSSGHVHHH.

5 helical membrane-spanning segments follow: residues 21 to 41, 48 to 68, 90 to 110, 123 to 143, and 164 to 184; these read LLFAFIVTAGFMLLEVVGGIL, LADAGHMLTDAAALLFALLAV, AAFVNAIALVVITLLIVWEAI, LMMVIAVAGLLANLFAFWILH, and LLGSVGAIVAALIIIWTGWTP.

It belongs to the cation diffusion facilitator (CDF) transporter (TC 2.A.4) family. SLC30A subfamily.

It is found in the cell inner membrane. Functionally, involved in zinc efflux across the cytoplasmic membrane, thus reducing zinc accumulation in the cytoplasm and rendering bacteria more resistant to zinc. It may contribute to zinc homeostasis at low concentrations of zinc. The sequence is that of Zinc transporter ZitB from Salmonella typhimurium (strain LT2 / SGSC1412 / ATCC 700720).